The primary structure comprises 103 residues: Large ribosomal subunit protein bL21 (103 aa).

It belongs to the bacterial ribosomal protein bL21 family. Part of the 50S ribosomal subunit. Contacts protein L20.

Functionally, this protein binds to 23S rRNA in the presence of protein L20. The protein is Large ribosomal subunit protein bL21 of Hamiltonella defensa subsp. Acyrthosiphon pisum (strain 5AT).